The sequence spans 448 residues: N-succinylarginine dihydrolase (448 aa).

Substrate-binding positions include 19-28 (GGLSYGNVAS), asparagine 110, and 137-138 (HR). The active site involves glutamate 174. Position 214 (arginine 214) interacts with substrate. Histidine 250 is an active-site residue. Residues aspartate 252 and asparagine 365 each contribute to the substrate site. Cysteine 371 functions as the Nucleophile in the catalytic mechanism.

It belongs to the succinylarginine dihydrolase family. Homodimer.

The catalysed reaction is N(2)-succinyl-L-arginine + 2 H2O + 2 H(+) = N(2)-succinyl-L-ornithine + 2 NH4(+) + CO2. It functions in the pathway amino-acid degradation; L-arginine degradation via AST pathway; L-glutamate and succinate from L-arginine: step 2/5. Its function is as follows. Catalyzes the hydrolysis of N(2)-succinylarginine into N(2)-succinylornithine, ammonia and CO(2). This is N-succinylarginine dihydrolase from Pseudomonas aeruginosa (strain LESB58).